A 238-amino-acid chain; its full sequence is MEKEKKDDEKPDLENSVDFSEQFNQLELLKTHGHLIPTGTQSLWVGNSDEDEEQEEKNEEWYQLQEKKMEKDPSKLLLWAAEKNRLATVQRLLSEKAAEVNTRDEDEYTPLHRAAYSGHIDVVRELVAKGADVHAVTVDGWTPLHSACKWNNTKVASFLLQHDADINAQTKGLLTPLHLAAGNRDSRDTLELLLMNRYIKPELKNNSQETASDIARRTSIYHYLFEIAEGCTNSSPPS.

Residues 38–57 (TGTQSLWVGNSDEDEEQEEK) are disordered. Serine 48 is subject to Phosphoserine. Positions 48–57 (SDEDEEQEEK) are enriched in acidic residues. ANK repeat units lie at residues 72 to 105 (DPSK…TRDE), 106 to 135 (DEYT…DVHA), 139 to 168 (DGWT…DINA), and 172 to 205 (GLLT…ELKN).

In terms of tissue distribution, expressed in spermatogonia, spermatocytes and round spermatids.

It is found in the nucleus. Functionally, may have a role in spermatogenesis where it promotes autophagy in response to serum starvation, via the NF-kappaB pathway. The chain is Ankyrin repeat domain-containing protein 49 (Ankrd49) from Mus musculus (Mouse).